Consider the following 422-residue polypeptide: Keratin, type I cytoskeletal 23 (422 aa).

Polar residues predominate over residues 1–13 (MNSGHSFSQTPSA). Residues 1-71 (MNSGHSFSQT…GRSSPLLGGN (71 aa)) form a head region. Residues 1 to 73 (MNSGHSFSQT…SSPLLGGNGK (73 aa)) are disordered. The segment at 72–107 (GKATMQNLNDRLASYLEKVRALEEANMKLESRILKW) is coil 1A. The region spanning 72–382 (GKATMQNLND…RLLEGESEGT (311 aa)) is the IF rod domain. Positions 108-125 (HQQRDPGSKKDYSQYEEN) are linker 1. A coil 1B region spans residues 126 to 217 (ITHLQEQIVD…KHHEQEMEKH (92 aa)). Residues 218–240 (HVPSDFNVNVKVDTGPREDLIKV) form a linker 12 region. Positions 241 to 378 (LEDMRQEYEL…TTYRRLLEGE (138 aa)) are coil 2. The tract at residues 379 to 422 (SEGTREESKSSMKVSATPKIKAITQETINGRLVLCQVNEIQKHA) is rod-like helical tail.

This sequence belongs to the intermediate filament family. Heterotetramer of two type I and two type II keratins.

In Homo sapiens (Human), this protein is Keratin, type I cytoskeletal 23 (KRT23).